Reading from the N-terminus, the 1459-residue chain is PPE family protein PPE34 (1459 aa).

Belongs to the mycobacterial PPE family. In terms of assembly, interacts with human TLR2.

It is found in the cell membrane. Its subcellular location is the secreted. It localises to the cell wall. The protein resides in the cell surface. Its function is as follows. Facilitates a shift in the ensuing immunity toward the Th2 phenotype and could aid in immune evasion by mycobacteria. Interacts with human Toll-like receptor 2 (TLR2) and triggers functional maturation of human dendritic cells (DCs), leading to secretion of IL-4, IL-5 and IL-10 from CD4(+) T cells and induction of Th2 immune response. Maturation of DCs involves PI3K, ERK1/2, p38 MAPK and NF-kappa-B signaling pathways. In Mycobacterium tuberculosis (strain ATCC 25618 / H37Rv), this protein is PPE family protein PPE34.